The primary structure comprises 250 residues: DNA repair protein RecO (250 aa).

The protein belongs to the RecO family.

Its function is as follows. Involved in DNA repair and RecF pathway recombination. The chain is DNA repair protein RecO from Syntrophobacter fumaroxidans (strain DSM 10017 / MPOB).